The chain runs to 225 residues: DNA repair and recombination protein RadB (225 aa).

This sequence belongs to the eukaryotic RecA-like protein family. RadB subfamily.

Functionally, involved in DNA repair and in homologous recombination. May regulate the cleavage reactions of the branch-structured DNA. Has a very weak ATPase activity that is not stimulated by DNA. Binds DNA but does not promote DNA strands exchange. This is DNA repair and recombination protein RadB from Methanococcoides burtonii (strain DSM 6242 / NBRC 107633 / OCM 468 / ACE-M).